A 281-amino-acid chain; its full sequence is MKIIFFLCSFLFFIINTQCVTHESYQELVKKLEALEDAVLTGYSLFQKEKMVLNEEEITTKGASAQSGASAQSGASAQSGASAQSGTSGPSGPSGTSPSSRSNTLPRSNTSSGASPPADASDSDAKSYADLKHRVRNYLFTIKQLKYPESLDLPNHMLTLCDNIHGFKYLIDGYEEINELLYKLNFYFSLLRAKLNDVCANDYCQIPFNLKIRANELDVLKKLVFGYRKPLDNIKDNVGKMEDYIKKNKTTIANINELIEGSKKTIDQNKNADNEEGKKKI.

An N-terminal signal peptide occupies residues 1–19; that stretch reads MKIIFFLCSFLFFIINTQC. The segment covering 63–100 has biased composition (low complexity); that stretch reads ASAQSGASAQSGASAQSGASAQSGTSGPSGPSGTSPSS. The segment at 63–126 is disordered; that stretch reads ASAQSGASAQ…PADASDSDAK (64 aa). Residues 101–110 show a composition bias toward polar residues; the sequence is RSNTLPRSNT. The N-linked (GlcNAc...) asparagine glycan is linked to N109. Residues 111–120 are compositionally biased toward low complexity; that stretch reads SSGASPPADA. N248 carries N-linked (GlcNAc...) asparagine glycosylation.

Forms a complex composed of subunits p83, p30, p38, and p42 which remain non-covalently associated; the complex is formed at the merozoite surface prior to egress from host erythrocytes. Forms a complex composed of processed MSP1 subunits, MSP6 subunit p36 and MSP7; the complex is formed at the merozoite surface prior to egress from host erythrocytes. Within the complex, interacts (via subunit p38) with MSP6 subunit p36 and (via subunits p83, p30 and p38) with MSP7 (via subunit p22). Forms a complex composed of MSP1, MSP6, DBLMSP1 and DBLMSP2. Within the complex, interacts (via subunit p38) with DBLMSP1 and DBLMSP2. Forms a complex composed of MSP1, and rhoptry proteins RhopH3, RAP1 and CLAG9/RhopH3. Within the complex, interacts (via subunits p42 and p19) with RhopH3 (via C-terminus). Forms a complex composed of MSP1, MSP6, MSP7, MSP9 and MSP3; within the complex, MSP6 and MSP9 mediate the binding to the host erythrocyte. Interacts (via subunits p19 and p42) with MSP9; the interaction is direct; MSP1 subunits p19 or p42, and MSP9 form a co-ligand complex that interacts with host SLC4A1/Band 3 protein. May interact with PFD6. Interacts with host spectrin. The p190 precursor is cleaved by SUB1 prior to merozoite egress into 4 subunits p83, p30, p38, and p42 which remain non-covalently associated. SUB1-mediated proteolytic cleavage occurs in an orderly manner; the first cleavage occurs at the p30/p38 site, followed by cleavage at the p83/p30 site, the last cleavage occurs at the p38/p42 site. The order of cleavage is essential for parasite viability. SUB1-mediated processing is essential for merozoite egress. In a second processing step during erythrocyte invasion, p42 is cleaved by SUB2 into p33 and p19; the latter remains attached to the merozoite surface via its GPI-anchor and is endocytosed during the subsequent ring stage.

The protein localises to the cell membrane. It localises to the secreted. Its function is as follows. During the asexual blood stage, involved in merozoite egress from host erythrocytes possibly via its interaction with the host cytoskeleton protein spectrin resulting in the destabilization of the host cytoskeleton and thus leading to erythrocyte cell membrane rupture. Involved in the binding to host erythrocytes and is required for host erythrocyte invasion. This Plasmodium falciparum (isolate NF7 / Ghana) protein is Merozoite surface protein 1.